Here is a 352-residue protein sequence, read N- to C-terminus: Anthranilate phosphoribosyltransferase (352 aa).

Residues glycine 82, 85–86, serine 90, 92–95, 110–118, and glycine 122 contribute to the 5-phospho-alpha-D-ribose 1-diphosphate site; these read GD, NIST, and KHGNRAVTG. Glycine 82 is a binding site for anthranilate. A Mg(2+)-binding site is contributed by serine 94. Residue asparagine 113 coordinates anthranilate. An anthranilate-binding site is contributed by arginine 168. Positions 232 and 233 each coordinate Mg(2+).

It belongs to the anthranilate phosphoribosyltransferase family. Homodimer. It depends on Mg(2+) as a cofactor.

The catalysed reaction is N-(5-phospho-beta-D-ribosyl)anthranilate + diphosphate = 5-phospho-alpha-D-ribose 1-diphosphate + anthranilate. Its pathway is amino-acid biosynthesis; L-tryptophan biosynthesis; L-tryptophan from chorismate: step 2/5. In terms of biological role, catalyzes the transfer of the phosphoribosyl group of 5-phosphorylribose-1-pyrophosphate (PRPP) to anthranilate to yield N-(5'-phosphoribosyl)-anthranilate (PRA). In Methanothermobacter thermautotrophicus (strain ATCC 29096 / DSM 1053 / JCM 10044 / NBRC 100330 / Delta H) (Methanobacterium thermoautotrophicum), this protein is Anthranilate phosphoribosyltransferase.